The chain runs to 105 residues: Integration host factor subunit beta (105 aa).

It belongs to the bacterial histone-like protein family. Heterodimer of an alpha and a beta chain.

Its function is as follows. This protein is one of the two subunits of integration host factor, a specific DNA-binding protein that functions in genetic recombination as well as in transcriptional and translational control. The protein is Integration host factor subunit beta of Nitrosomonas europaea (strain ATCC 19718 / CIP 103999 / KCTC 2705 / NBRC 14298).